The sequence spans 383 residues: S-adenosylmethionine synthase (383 aa).

Histidine 15 is a binding site for ATP. Residue aspartate 17 participates in Mg(2+) binding. A K(+)-binding site is contributed by glutamate 43. 2 residues coordinate L-methionine: glutamate 56 and glutamine 99. Positions 99-109 are flexible loop; that stretch reads QSPDINQGVDR. Residues 164–166, 230–231, aspartate 239, 245–246, alanine 262, and lysine 266 contribute to the ATP site; these read DAK, RF, and RK. Residue aspartate 239 coordinates L-methionine. An L-methionine-binding site is contributed by lysine 270.

It belongs to the AdoMet synthase family. As to quaternary structure, homotetramer; dimer of dimers. Mg(2+) is required as a cofactor. The cofactor is K(+).

It is found in the cytoplasm. It carries out the reaction L-methionine + ATP + H2O = S-adenosyl-L-methionine + phosphate + diphosphate. The protein operates within amino-acid biosynthesis; S-adenosyl-L-methionine biosynthesis; S-adenosyl-L-methionine from L-methionine: step 1/1. In terms of biological role, catalyzes the formation of S-adenosylmethionine (AdoMet) from methionine and ATP. The overall synthetic reaction is composed of two sequential steps, AdoMet formation and the subsequent tripolyphosphate hydrolysis which occurs prior to release of AdoMet from the enzyme. The sequence is that of S-adenosylmethionine synthase from Shewanella oneidensis (strain ATCC 700550 / JCM 31522 / CIP 106686 / LMG 19005 / NCIMB 14063 / MR-1).